Here is a 409-residue protein sequence, read N- to C-terminus: Peptidase T (409 aa).

Residue H78 coordinates Zn(2+). The active site involves D80. Residue D140 coordinates Zn(2+). The active-site Proton acceptor is the E173. Positions 174, 196, and 379 each coordinate Zn(2+).

It belongs to the peptidase M20B family. It depends on Zn(2+) as a cofactor.

It is found in the cytoplasm. It catalyses the reaction Release of the N-terminal residue from a tripeptide.. Its function is as follows. Cleaves the N-terminal amino acid of tripeptides. The protein is Peptidase T of Salmonella agona (strain SL483).